Here is a 501-residue protein sequence, read N- to C-terminus: Aspartate--tRNA ligase, cytoplasmic (501 aa).

Position 52 is a phosphothreonine (threonine 52). Lysine 74 carries the post-translational modification N6-acetyllysine. Glutamate 229 provides a ligand contact to L-aspartate. Position 249 is a phosphoserine (serine 249). Residues 251 to 254 (QLYK) are aspartate. Arginine 273 serves as a coordination point for L-aspartate. ATP contacts are provided by residues 273 to 275 (RAE) and 281 to 283 (RHL). An N6-acetyllysine modification is found at lysine 374. The tract at residues 411–415 (KQSNS) is binding site for the 3'-end of tRNA. Residue glutamate 424 coordinates ATP. L-aspartate contacts are provided by serine 427 and arginine 431. Residue 472 to 475 (GLER) coordinates ATP. Threonine 500 is subject to Phosphothreonine; by PKA.

Belongs to the class-II aminoacyl-tRNA synthetase family. Type 2 subfamily. In terms of assembly, homodimer. Part of a multisubunit complex that groups tRNA ligases for Arg (RARS1), Asp (DARS1), Gln (QARS1), Ile (IARS1), Leu (LARS1), Lys (KARS1), Met (MARS1) the bifunctional ligase for Glu and Pro (EPRS1) and the auxiliary subunits AIMP1/p43, AIMP2/p38 and EEF1E1/p18. In terms of tissue distribution, expression in the developing and adult brain shows similar patterns. Highly expressed in the ventricular and subventricular zones, including hippocampal subfields, the midlateral temporal cortex and the frontal polar cortex. The cerebellum, cerebral cortex, hippocampus, and lateral ventricle show preferential neuronal expression. Expression in the peripheral neurons is evident in the colon.

Its subcellular location is the cytoplasm. The protein localises to the cytosol. It carries out the reaction tRNA(Asp) + L-aspartate + ATP = L-aspartyl-tRNA(Asp) + AMP + diphosphate. In terms of biological role, catalyzes the specific attachment of an amino acid to its cognate tRNA in a 2 step reaction: the amino acid (AA) is first activated by ATP to form AA-AMP and then transferred to the acceptor end of the tRNA. The sequence is that of Aspartate--tRNA ligase, cytoplasmic from Homo sapiens (Human).